Here is a 108-residue protein sequence, read N- to C-terminus: Large ribosomal subunit protein uL24 (108 aa).

The tract at residues 46 to 65 (RHTRVQQSSRGSQSGGIVTQ) is disordered. The segment covering 51 to 61 (QQSSRGSQSGG) has biased composition (low complexity).

It belongs to the universal ribosomal protein uL24 family. Part of the 50S ribosomal subunit.

Its function is as follows. One of two assembly initiator proteins, it binds directly to the 5'-end of the 23S rRNA, where it nucleates assembly of the 50S subunit. In terms of biological role, one of the proteins that surrounds the polypeptide exit tunnel on the outside of the subunit. In Parafrankia sp. (strain EAN1pec), this protein is Large ribosomal subunit protein uL24.